The primary structure comprises 405 residues: Na(+)-translocating NADH-quinone reductase subunit F (405 aa).

The chain crosses the membrane as a helical span at residues Ile3–Phe23. The 93-residue stretch at Gly32–Val124 folds into the 2Fe-2S ferredoxin-type domain. Residues Cys67, Cys73, Cys76, and Cys108 each contribute to the [2Fe-2S] cluster site. The region spanning Val127–Lys267 is the FAD-binding FR-type domain.

The protein belongs to the NqrF family. As to quaternary structure, composed of six subunits; NqrA, NqrB, NqrC, NqrD, NqrE and NqrF. It depends on [2Fe-2S] cluster as a cofactor. FAD serves as cofactor.

The protein resides in the cell inner membrane. It catalyses the reaction a ubiquinone + n Na(+)(in) + NADH + H(+) = a ubiquinol + n Na(+)(out) + NAD(+). In terms of biological role, NQR complex catalyzes the reduction of ubiquinone-1 to ubiquinol by two successive reactions, coupled with the transport of Na(+) ions from the cytoplasm to the periplasm. The first step is catalyzed by NqrF, which accepts electrons from NADH and reduces ubiquinone-1 to ubisemiquinone by a one-electron transfer pathway. This chain is Na(+)-translocating NADH-quinone reductase subunit F, found in Neisseria meningitidis serogroup C / serotype 2a (strain ATCC 700532 / DSM 15464 / FAM18).